The chain runs to 299 residues: Glycine--tRNA ligase alpha subunit (299 aa).

This sequence belongs to the class-II aminoacyl-tRNA synthetase family. In terms of assembly, tetramer of two alpha and two beta subunits.

The protein resides in the cytoplasm. The catalysed reaction is tRNA(Gly) + glycine + ATP = glycyl-tRNA(Gly) + AMP + diphosphate. The sequence is that of Glycine--tRNA ligase alpha subunit from Laribacter hongkongensis (strain HLHK9).